Reading from the N-terminus, the 523-residue chain is Leucine-rich repeat-containing protein 27 (523 aa).

The segment at 1-26 (MEDTSPQAVAEKAAKDPKAAKDLKDD) is disordered. A compositionally biased stretch (basic and acidic residues) spans 12-26 (KAAKDPKAAKDLKDD). 5 LRR repeats span residues 55–76 (SSPV…FKIP), 77–98 (NLQQ…FFQL), 101–122 (NLTW…IGSH), 124–145 (HLKT…LGQV), and 147–168 (TLTA…IVQK). Disordered regions lie at residues 206–236 (QYPV…ADFF) and 372–394 (REQT…HSNM). Basic and acidic residues-rich tracts occupy residues 227–236 (DQEKEKADFF) and 372–385 (REQT…RELS). Coiled coils occupy residues 335–374 (VHAN…WREQ) and 463–494 (MQDI…TLNK). Residues 503 to 523 (GNLSLHPPASQPQNIFFNTKS) are disordered. Over residues 513 to 523 (QPQNIFFNTKS) the composition is skewed to polar residues.

This chain is Leucine-rich repeat-containing protein 27 (Lrrc27), found in Mus musculus (Mouse).